The sequence spans 314 residues: Methionyl-tRNA formyltransferase (314 aa).

Ser-113–Pro-116 contributes to the (6S)-5,6,7,8-tetrahydrofolate binding site.

It belongs to the Fmt family.

It catalyses the reaction L-methionyl-tRNA(fMet) + (6R)-10-formyltetrahydrofolate = N-formyl-L-methionyl-tRNA(fMet) + (6S)-5,6,7,8-tetrahydrofolate + H(+). Functionally, attaches a formyl group to the free amino group of methionyl-tRNA(fMet). The formyl group appears to play a dual role in the initiator identity of N-formylmethionyl-tRNA by promoting its recognition by IF2 and preventing the misappropriation of this tRNA by the elongation apparatus. The sequence is that of Methionyl-tRNA formyltransferase from Pseudomonas syringae pv. tomato (strain ATCC BAA-871 / DC3000).